We begin with the raw amino-acid sequence, 432 residues long: Adenylosuccinate synthetase (432 aa).

Residues 12–18 and 40–42 each bind GTP; these read GDEGKGK and GHT. Aspartate 13 functions as the Proton acceptor in the catalytic mechanism. Residues aspartate 13 and glycine 40 each coordinate Mg(2+). IMP-binding positions include 13-16, 38-41, threonine 130, arginine 144, glutamine 225, threonine 240, and arginine 304; these read DEGK and NAGH. Histidine 41 (proton donor) is an active-site residue. 300–306 is a substrate binding site; sequence ATTGRRR. GTP-binding positions include arginine 306, 332–334, and 415–417; these read KLD and SVG.

This sequence belongs to the adenylosuccinate synthetase family. In terms of assembly, homodimer. Mg(2+) is required as a cofactor.

It is found in the cytoplasm. The catalysed reaction is IMP + L-aspartate + GTP = N(6)-(1,2-dicarboxyethyl)-AMP + GDP + phosphate + 2 H(+). The protein operates within purine metabolism; AMP biosynthesis via de novo pathway; AMP from IMP: step 1/2. In terms of biological role, plays an important role in the de novo pathway of purine nucleotide biosynthesis. Catalyzes the first committed step in the biosynthesis of AMP from IMP. The chain is Adenylosuccinate synthetase from Syntrophus aciditrophicus (strain SB).